A 334-amino-acid chain; its full sequence is Malate dehydrogenase, mitochondrial (334 aa).

A mitochondrion-targeting transit peptide spans 1 to 17; sequence MLSRVAKRAFSSTVANP. NAD(+)-binding positions include 24–30 and Asp50; that span reads GAGGGIG. 2 residues coordinate substrate: Arg99 and Arg105. NAD(+) is bound by residues Asn112 and 135–137; that span reads ISN. Positions 137 and 171 each coordinate substrate. Position 177 is a phosphoserine (Ser177). Residue His195 is the Proton acceptor of the active site. Thr199 carries the phosphothreonine modification. NAD(+) is bound at residue Met245.

It belongs to the LDH/MDH superfamily. MDH type 1 family. Homodimer.

It localises to the mitochondrion matrix. It carries out the reaction (S)-malate + NAD(+) = oxaloacetate + NADH + H(+). This chain is Malate dehydrogenase, mitochondrial (MDH1), found in Saccharomyces cerevisiae (strain ATCC 204508 / S288c) (Baker's yeast).